The chain runs to 464 residues: 3-isopropylmalate dehydratase large subunit (464 aa).

The [4Fe-4S] cluster site is built by Cys337, Cys397, and Cys400.

Belongs to the aconitase/IPM isomerase family. LeuC type 1 subfamily. Heterodimer of LeuC and LeuD. It depends on [4Fe-4S] cluster as a cofactor.

The catalysed reaction is (2R,3S)-3-isopropylmalate = (2S)-2-isopropylmalate. It participates in amino-acid biosynthesis; L-leucine biosynthesis; L-leucine from 3-methyl-2-oxobutanoate: step 2/4. Functionally, catalyzes the isomerization between 2-isopropylmalate and 3-isopropylmalate, via the formation of 2-isopropylmaleate. This is 3-isopropylmalate dehydratase large subunit from Bacillus cereus (strain 03BB102).